Reading from the N-terminus, the 342-residue chain is Dihydroorotate dehydrogenase (quinone) (342 aa).

Residues 65-69 and threonine 89 each bind FMN; that span reads AGLDK. Residue lysine 69 participates in substrate binding. 114–118 provides a ligand contact to substrate; the sequence is NRMGF. The FMN site is built by asparagine 142 and asparagine 175. Asparagine 175 is a substrate binding site. The active-site Nucleophile is serine 178. A substrate-binding site is contributed by asparagine 180. 2 residues coordinate FMN: lysine 220 and threonine 248. Substrate is bound at residue 249–250; sequence NT. Residues glycine 271, glycine 300, and 321-322 contribute to the FMN site; that span reads YT.

This sequence belongs to the dihydroorotate dehydrogenase family. Type 2 subfamily. In terms of assembly, monomer. Requires FMN as cofactor.

The protein localises to the cell membrane. It carries out the reaction (S)-dihydroorotate + a quinone = orotate + a quinol. It participates in pyrimidine metabolism; UMP biosynthesis via de novo pathway; orotate from (S)-dihydroorotate (quinone route): step 1/1. Its function is as follows. Catalyzes the conversion of dihydroorotate to orotate with quinone as electron acceptor. This is Dihydroorotate dehydrogenase (quinone) from Burkholderia pseudomallei (strain 668).